The following is a 1108-amino-acid chain: MRKDERERDTPAMRSPPPPPPPATATAASPPESLRNGYVKSCVSPLRQDPPRSFFFHLCRFCNVEPPAASLRAGARLSLAALAAFVLAALLGAGPERWAAAATGLRTLLSACSLSLSPLFSIACAFFFLTCFLTRAQRGPDRGAGSWWLLALPACCYLGDFAAWQWWSWLRGEPAAAAAGRLCLVLSCVGLLTLAPRVRLRHGVLVLLFAGLVWWVSFSGLGALPPALRPLLSCLVGGAGCLLALGLDHFFHVRGASPPPRSASTADEKVPVIRPRRRSSCVSLGESAAGYYGSGKMFRRPSLPCISREQMILWDWDLKQWCKPHYQNSGGGNGVDLSVLNEARNMVSDLLIDPSLPPQVISSLRSISSLMGAFSGSCRPKINSFTPFPGFYPCSEVEDPVEKGDRKLHKGLSSKPSFPTAQLRRSSGASGLLTSEHHSRWDRSGGKRPYQELSVSSHGCHLNGPFSSNLMTIPKQRSSSVSLTHHAGLRRAGALPSPSLLNSSSHVPVSAGCLTNRSPVGFLDTSDFLTKPSVTLHRSLGSVSSAADFHQYLRNSDSSLCSSCGHQILKYVSTCEPDGTDHHNEKSGEEDSTVFSKERLNIVETQEEETVKEDCRELFLEGDDHLMEEAQQPNIDQEVLLDPMLVEDYDSLIEKMSNWNFQIFELVEKMGEKSGRILSQVMYTLFQDTGLLETFKIPTQEFMNYFRALENGYRDIPYHNRVHATDVLHAVWYLTTRPIPGLQQLHNNHETETKADSDARLSSGQIAYLSSKSCCIPDKSYGCLSSNIPALELMALYVAAAMHDYDHPGRTNAFLVATNAPQAVLYNDRSVLENHHAASAWNLYLSRPEYNFLLNLDHMEFKRFRFLVIEAILATDLKKHFDFLAEFNAKANDVNSNGIEWSSENDRLLVCQVCIKLADINGPAKDRDLHLRWTEGIVNEFYEQGDEEATLGLPISPFMDRSSPQLAKLQESFITHIVGPLCNSYDAAGLLPGQWIEAEEGDDTESDDDDDDDDDDDDDDDEELDSDDEETEDNLNPKPQRRKGRRRIFCQLMHHLTENHKIWKEIIEEEEKCKAEGNKLQVDNASLPQADEIQVIEEADEEEEQMFE.

Residues 1 to 11 (MRKDERERDTP) show a composition bias toward basic and acidic residues. The disordered stretch occupies residues 1-32 (MRKDERERDTPAMRSPPPPPPPATATAASPPE). Residues 1-32 (MRKDERERDTPAMRSPPPPPPPATATAASPPE) are interaction with RAPGEF3. Positions 14–23 (RSPPPPPPPA) are enriched in pro residues. S15 is modified (phosphoserine). Helical transmembrane passes span 73–93 (AGARLSLAALAAFVLAALLGA), 114–134 (LSLSPLFSIACAFFFLTCFLT), 144–164 (AGSWWLLALPACCYLGDFAAW), 175–195 (AAAAAGRLCLVLSCVGLLTLA), 204–224 (VLVLLFAGLVWWVSFSGLGAL), and 231–251 (LLSCLVGGAGCLLALGLDHFF). Phosphoserine; by PKB/AKT1 or PKB/AKT2 is present on S279. A phosphoserine mark is found at S280 and S427. Residues 405–448 (DRKLHKGLSSKPSFPTAQLRRSSGASGLLTSEHHSRWDRSGGKR) are disordered. The span at 414–433 (SKPSFPTAQLRRSSGASGLL) shows a compositional bias: polar residues. The tract at residues 421–445 (AQLRRSSGASGLLTSEHHSRWDRSG) is interaction with PIK3R6. Residues 435–445 (SEHHSRWDRSG) show a composition bias toward basic and acidic residues. One can recognise a PDEase domain in the interval 633-1070 (PNIDQEVLLD…KIWKEIIEEE (438 aa)). Catalysis depends on H719, which acts as the Proton donor. An AMP-binding site is contributed by H719. Residues H723, H803, D804, and D919 each contribute to the Mg(2+) site. AMP is bound by residues D804, D919, and Q970. Acidic residues predominate over residues 999-1033 (EEGDDTESDDDDDDDDDDDDDDDEELDSDDEETED). Positions 999–1042 (EEGDDTESDDDDDDDDDDDDDDDEELDSDDEETEDNLNPKPQRR) are disordered.

It belongs to the cyclic nucleotide phosphodiesterase family. PDE3 subfamily. As to quaternary structure, homodimer. Interacts with PIK3CG; regulates PDE3B activity and thereby cAMP levels in cells. Interacts with RAPGEF3 and PIK3R6; form a signaling complex that regulates phosphatidylinositol 3-kinase gamma in angiogenesis. Interacts with ABHD15; this interaction regulates PDE3B's stability and expression and, thereby, impacts the antilipolytic action of insulin. Requires Mg(2+) as cofactor. Mn(2+) is required as a cofactor. Post-translationally, phosphorylation at Ser-279 mediates insulin-induced activation of PDE3B. Abundant in adipose tissues.

The protein localises to the membrane. The enzyme catalyses a nucleoside 3',5'-cyclic phosphate + H2O = a nucleoside 5'-phosphate + H(+). It catalyses the reaction 3',5'-cyclic AMP + H2O = AMP + H(+). The catalysed reaction is 3',5'-cyclic GMP + H2O = GMP + H(+). Its activity is regulated as follows. Inhibited by cGMP. Functionally, cyclic nucleotide phosphodiesterase with a dual-specificity for the second messengers cAMP and cGMP, which are key regulators of many important physiological processes. Regulates angiogenesis by inhibiting the cAMP-dependent guanine nucleotide exchange factor RAPGEF3 and downstream phosphatidylinositol 3-kinase gamma-mediated signaling. Controls cardiac contractility by reducing cAMP concentration in cardiocytes. This Rattus norvegicus (Rat) protein is cGMP-inhibited 3',5'-cyclic phosphodiesterase 3B.